Reading from the N-terminus, the 486-residue chain is Cardiolipin synthase A (486 aa).

The next 2 membrane-spanning stretches (helical) occupy residues 3–23 and 38–58; these read TFYTVISWLLVFGYWLLIAGV and MAWLLVIYILPLVGIVAYLSF. 2 PLD phosphodiesterase domains span residues 219–246 and 399–426; these read MDLRQHRKIILIDNRIAYTGSMNMVDPR and KDGLLHTKSVLVDGQLSLVGTVNLDMRS. Catalysis depends on residues His-224, Lys-226, Asp-231, His-404, Lys-406, and Asp-411.

Belongs to the phospholipase D family. Cardiolipin synthase subfamily. ClsA sub-subfamily.

It localises to the cell inner membrane. It carries out the reaction 2 a 1,2-diacyl-sn-glycero-3-phospho-(1'-sn-glycerol) = a cardiolipin + glycerol. Catalyzes the reversible phosphatidyl group transfer from one phosphatidylglycerol molecule to another to form cardiolipin (CL) (diphosphatidylglycerol) and glycerol. The sequence is that of Cardiolipin synthase A from Pectobacterium carotovorum subsp. carotovorum (strain PC1).